The primary structure comprises 107 residues: Glutaredoxin 4 (107 aa).

The region spanning 4–106 (LDKIKKQISE…TLLAEVAAKH (103 aa)) is the Glutaredoxin domain. K21 lines the glutathione pocket. [2Fe-2S] cluster is bound at residue C29. Glutathione-binding positions include R58, F70, and 83–84 (CD).

It belongs to the glutaredoxin family. Monothiol subfamily. As to quaternary structure, homodimer.

The protein localises to the cytoplasm. In terms of biological role, monothiol glutaredoxin involved in the biogenesis of iron-sulfur clusters. This Haemophilus influenzae (strain 86-028NP) protein is Glutaredoxin 4 (grxD).